We begin with the raw amino-acid sequence, 269 residues long: Thiazole synthase (269 aa).

The active-site Schiff-base intermediate with DXP is the lysine 105. 1-deoxy-D-xylulose 5-phosphate-binding positions include glycine 166, 192–193 (AG), and 214–215 (NT). Residues 245 to 269 (AMSAQDAAQPSTPVLGTPFWHHDHG) are disordered.

This sequence belongs to the ThiG family. As to quaternary structure, homotetramer. Forms heterodimers with either ThiH or ThiS.

Its subcellular location is the cytoplasm. The catalysed reaction is [ThiS sulfur-carrier protein]-C-terminal-Gly-aminoethanethioate + 2-iminoacetate + 1-deoxy-D-xylulose 5-phosphate = [ThiS sulfur-carrier protein]-C-terminal Gly-Gly + 2-[(2R,5Z)-2-carboxy-4-methylthiazol-5(2H)-ylidene]ethyl phosphate + 2 H2O + H(+). It functions in the pathway cofactor biosynthesis; thiamine diphosphate biosynthesis. Catalyzes the rearrangement of 1-deoxy-D-xylulose 5-phosphate (DXP) to produce the thiazole phosphate moiety of thiamine. Sulfur is provided by the thiocarboxylate moiety of the carrier protein ThiS. In vitro, sulfur can be provided by H(2)S. This chain is Thiazole synthase, found in Paracidovorax citrulli (strain AAC00-1) (Acidovorax citrulli).